Reading from the N-terminus, the 241-residue chain is 2-heptyl-1-hydroxyquinolin-4(1H)-one methyltransferase (241 aa).

This sequence belongs to the methyltransferase superfamily. Monomer.

It is found in the cytoplasm. It catalyses the reaction 2-heptyl-1-hydroxy-4(1H)-quinolinone + S-adenosyl-L-methionine = 2-heptyl-1-methoxy-4(1H)-quinolinone + S-adenosyl-L-homocysteine + H(+). Functionally, involved in cellular response to chemical stress and may contribute to resistance toward antimicrobial natural compounds as well as drugs. Catalyzes the methylation and detoxification of the P.aeruginosa toxin 2-heptyl-1-hydroxy-4(1H)-quinolinone (HQNO) to 2-heptyl-1-methoxy-4(1H)-quinolinone (HMOQ). This Mycobacterium bovis (strain BCG / Pasteur 1173P2) protein is 2-heptyl-1-hydroxyquinolin-4(1H)-one methyltransferase.